The primary structure comprises 371 residues: Anhydro-N-acetylmuramic acid kinase (371 aa).

9–16 (GTSMDGID) lines the ATP pocket.

This sequence belongs to the anhydro-N-acetylmuramic acid kinase family.

The catalysed reaction is 1,6-anhydro-N-acetyl-beta-muramate + ATP + H2O = N-acetyl-D-muramate 6-phosphate + ADP + H(+). It participates in amino-sugar metabolism; 1,6-anhydro-N-acetylmuramate degradation. It functions in the pathway cell wall biogenesis; peptidoglycan recycling. Its function is as follows. Catalyzes the specific phosphorylation of 1,6-anhydro-N-acetylmuramic acid (anhMurNAc) with the simultaneous cleavage of the 1,6-anhydro ring, generating MurNAc-6-P. Is required for the utilization of anhMurNAc either imported from the medium or derived from its own cell wall murein, and thus plays a role in cell wall recycling. This Azorhizobium caulinodans (strain ATCC 43989 / DSM 5975 / JCM 20966 / LMG 6465 / NBRC 14845 / NCIMB 13405 / ORS 571) protein is Anhydro-N-acetylmuramic acid kinase.